Reading from the N-terminus, the 377-residue chain is Peroxisomal membrane protein PEX14 (377 aa).

The segment covering 1–20 (MASSEQAEQPSQPSSSPGSE) has biased composition (low complexity). Residues 1–23 (MASSEQAEQPSQPSSSPGSENVV) form a disordered region. Ala2 is subject to N-acetylalanine. The Peroxisomal portion of the chain corresponds to 2-108 (ASSEQAEQPS…CSPGSSRWRD (107 aa)). An N6-acetyllysine modification is found at Lys34. Residues 109–126 (YGALAIIMAGIAFGFHQL) form a helical membrane-spanning segment. The Cytoplasmic segment spans residues 127–377 (YKKYLLPLIL…EGASNESERH (251 aa)). The tract at residues 230-377 (PPSPSAPKIP…EGASNESERH (148 aa)) is disordered. Ser232 bears the Phosphoserine mark. Low complexity-rich tracts occupy residues 244–259 (PVKS…VNHH) and 265–275 (SPVSNESTSSS). A phosphoserine mark is found at Ser282 and Ser335. Positions 323 to 342 (KEEEEEEEEEDVSHVDEEDV) are enriched in acidic residues. Over residues 360–377 (QVDKLRRPEGASNESERH) the composition is skewed to basic and acidic residues.

It belongs to the peroxin-14 family. Interacts with PEX13; forming the PEX13-PEX14 docking complex. Interacts with PEX5 (via WxxxF/Y motifs). Interacts with PEX19. Interacts with tubulin.

The protein localises to the peroxisome membrane. Functionally, component of the PEX13-PEX14 docking complex, a translocon channel that specifically mediates the import of peroxisomal cargo proteins bound to PEX5 receptor. The PEX13-PEX14 docking complex forms a large import pore which can be opened to a diameter of about 9 nm. Mechanistically, PEX5 receptor along with cargo proteins associates with the PEX14 subunit of the PEX13-PEX14 docking complex in the cytosol, leading to the insertion of the receptor into the organelle membrane with the concomitant translocation of the cargo into the peroxisome matrix. Plays a key role for peroxisome movement through a direct interaction with tubulin. This chain is Peroxisomal membrane protein PEX14, found in Cricetulus longicaudatus (Long-tailed dwarf hamster).